We begin with the raw amino-acid sequence, 218 residues long: uncharacterized protein (218 aa).

This is an uncharacterized protein from Ureaplasma parvum serovar 3 (strain ATCC 700970).